The following is a 235-amino-acid chain: Probable endonuclease LCL3 (235 aa).

Residues 11–33 traverse the membrane as a helical segment; that stretch reads ISLIHPKVLLLSAGVTTSLFLSY. The TNase-like domain maps to 58–216; it reads TPLYGRVTRV…KWLRRGLWSL (159 aa). R107 is a catalytic residue. D112 contributes to the Ca(2+) binding site. Active-site residues include E115 and R155.

This sequence belongs to the LCL3 family.

It is found in the mitochondrion. Its subcellular location is the membrane. The chain is Probable endonuclease LCL3 (LCL3) from Debaryomyces hansenii (strain ATCC 36239 / CBS 767 / BCRC 21394 / JCM 1990 / NBRC 0083 / IGC 2968) (Yeast).